Here is a 369-residue protein sequence, read N- to C-terminus: Phosphate acyltransferase (369 aa).

The disordered stretch occupies residues 342–369 (ASRAPNSQTAGGERAAAVPQSAQLRMDS).

Belongs to the PlsX family. As to quaternary structure, homodimer. Probably interacts with PlsY.

It localises to the cytoplasm. The enzyme catalyses a fatty acyl-[ACP] + phosphate = an acyl phosphate + holo-[ACP]. It participates in lipid metabolism; phospholipid metabolism. Catalyzes the reversible formation of acyl-phosphate (acyl-PO(4)) from acyl-[acyl-carrier-protein] (acyl-ACP). This enzyme utilizes acyl-ACP as fatty acyl donor, but not acyl-CoA. This Methylocella silvestris (strain DSM 15510 / CIP 108128 / LMG 27833 / NCIMB 13906 / BL2) protein is Phosphate acyltransferase.